A 564-amino-acid chain; its full sequence is MESLQIYLIWSVYGVAIAILIAVASTFICAYQTPRDRSPSVTLICIISITVLLATVLLLPVDIALVSSITSSALGRRKSWATQAEVDKITFSLTIVYYSLYTVDALLCLIGIPFTYFWYEEYDEVAAEAGQQTAGQRFWAAFKYTLFFVAILIVLFLVGFFIPTSRNLAGHDSDFLRRLFTEDRGQHALTFSVGILTTLGLSLYIIYTSSGLARLPVLLMKTAPSFSSPSLIASTAMQLDSNRERQRQLDGRCGGDTALLSSKDRRELDSLVREERTLTRRQRLAEGAQEERRSWPIKVYHKMEAVLHPFKLLAGFVLLLAALFLWTSLCVTAIDKLMNSPCKHRCGYILERVNIFNPVNWVLIQSSRVFPVDYVIFTLIVLFLFCSSVVGIAAFGIRFLWIQIFSIRKGRTSPQALLLLTSMLMLITLALNYSVAVILAPQYATFGPQTFCDMPPVSSGPQPDCSRARNLIKSCSEKAENIGANGLCTPSVASTLLNQMTSNFPFFGAVFFWAQFIFLGLYLLVLVVSVTRSPRLDEHQLDEDAEEAEEERLLARTGRRINTA.

The next 9 helical transmembrane spans lie at 8 to 28 (LIWSVYGVAIAILIAVASTFI), 41 to 61 (VTLICIISITVLLATVLLLPV), 94 to 114 (TIVYYSLYTVDALLCLIGIPF), 144 to 164 (YTLFFVAILIVLFLVGFFIPT), 188 to 208 (ALTFSVGILTTLGLSLYIIYT), 312 to 332 (LLAGFVLLLAALFLWTSLCVT), 375 to 395 (VIFTLIVLFLFCSSVVGIAAF), 418 to 438 (LLLTSMLMLITLALNYSVAVI), and 506 to 526 (FFGAVFFWAQFIFLGLYLLVL).

This sequence belongs to the LIMR family. LMBRD1 subfamily.

It localises to the lysosome membrane. In terms of biological role, probable lysosomal cobalamin transporter. Required to export cobalamin from lysosomes allowing its conversion to cofactors. This is Probable lysosomal cobalamin transporter from Aspergillus clavatus (strain ATCC 1007 / CBS 513.65 / DSM 816 / NCTC 3887 / NRRL 1 / QM 1276 / 107).